Here is a 47-residue protein sequence, read N- to C-terminus: Defensin-like protein 1 (47 aa).

4 disulfides stabilise this stretch: C3/C47, C14/C36, C20/C41, and C24/C43.

It belongs to the DEFL family. Protease inhibitor I18 (RTI/MTI-2) subfamily.

The protein is Defensin-like protein 1 of Sorghum bicolor (Sorghum).